Here is a 160-residue protein sequence, read N- to C-terminus: uncharacterized protein (160 aa).

An N-terminal signal peptide occupies residues 1–29; that stretch reads MCGLGIVPMVKPALFGMLILVIGTSTVQA.

This is an uncharacterized protein from Sinorhizobium fredii (strain NBRC 101917 / NGR234).